Here is a 484-residue protein sequence, read N- to C-terminus: MTKVELAKLRTVIPEMRRVRRIHFIGIGGAGMGGIAEVLANEGYQVTGSDLARNAVTERLESLGAHIFVGHSAEHVNEASVVVVSTAIKQDNPELLAARELRIPVVRRAEMLAELMRFRHGIAIAGTHGKTTTTSLVASIYAEADRDPTFVIGGLLNSAGTNARLGSSRYLIAEADESDASFLHLQPMVSIVTNIEADHMDTYGGDFSKLKATFIDFLHNLPFYGLAVVCVDDPVIRGMLPEIARPTITYGLSDDADVQVLDFVQTSNRSRFRVRRKDAGELEVTLNLPGIHNALNAAAAIAVATEDGIGDDAIIRALAKFEGVGRRFQQYGEFETGRGKAMLVDDYGHHPSEVKVTINAARAGWPEKRLVMVFQPHRYTRTRDLYEDFADVLSKVDVLVMLEVYAAGEEPIPGADGRALCRSIRSRGSLEPIFVATPDDVPAVLAGLVGEGDLVLTQGAGNVGALARRLGEMKLSIESMKSGA.

126–132 lines the ATP pocket; sequence GTHGKTT.

It belongs to the MurCDEF family.

The protein resides in the cytoplasm. It carries out the reaction UDP-N-acetyl-alpha-D-muramate + L-alanine + ATP = UDP-N-acetyl-alpha-D-muramoyl-L-alanine + ADP + phosphate + H(+). The protein operates within cell wall biogenesis; peptidoglycan biosynthesis. Its function is as follows. Cell wall formation. The protein is UDP-N-acetylmuramate--L-alanine ligase of Aeromonas hydrophila subsp. hydrophila (strain ATCC 7966 / DSM 30187 / BCRC 13018 / CCUG 14551 / JCM 1027 / KCTC 2358 / NCIMB 9240 / NCTC 8049).